Consider the following 126-residue polypeptide: Histone H2B (126 aa).

Over residues 1 to 12 (MPEPAKSAPAPK) the composition is skewed to low complexity. The interval 1 to 36 (MPEPAKSAPAPKKGSKKAVTKTQKKGDKKRKKSRKE) is disordered. N6-acetyllysine is present on residues K6 and K13. The span at 13–34 (KGSKKAVTKTQKKGDKKRKKSR) shows a compositional bias: basic residues. A Phosphoserine modification is found at S15. N6-acetyllysine occurs at positions 16 and 21. A Glycyl lysine isopeptide (Lys-Gly) (interchain with G-Cter in ubiquitin) cross-link involves residue K121.

This sequence belongs to the histone H2B family. As to quaternary structure, the nucleosome is a histone octamer containing two molecules each of H2A, H2B, H3 and H4 assembled in one H3-H4 heterotetramer and two H2A-H2B heterodimers. The octamer wraps approximately 147 bp of DNA. Monoubiquitination of Lys-121 by the RNF20/40 complex gives a specific tag for epigenetic transcriptional activation and is also prerequisite for histone H3 'Lys-4' and 'Lys-79' methylation. In terms of processing, phosphorylated on Ser-15 during apoptosis; which facilitates apoptotic chromatin condensation.

The protein resides in the nucleus. It localises to the chromosome. Core component of nucleosome. Nucleosomes wrap and compact DNA into chromatin, limiting DNA accessibility to the cellular machineries which require DNA as a template. Histones thereby play a central role in transcription regulation, DNA repair, DNA replication and chromosomal stability. DNA accessibility is regulated via a complex set of post-translational modifications of histones, also called histone code, and nucleosome remodeling. The polypeptide is Histone H2B (Cairina moschata (Muscovy duck)).